Reading from the N-terminus, the 591-residue chain is Fidgetin-like protein 1 (591 aa).

2 disordered regions span residues 1 to 117 (MYSP…KSSL) and 223 to 249 (GQEPQKSKFQIPLDRQSSSQSNHSQPI). Positions 17–26 (KRPETEENRG) are enriched in basic and acidic residues. The span at 76 to 93 (DDDPESIVIDEDDEEDEP) shows a compositional bias: acidic residues. The segment covering 237–249 (RQSSSQSNHSQPI) has biased composition (polar residues). ATP contacts are provided by residues A319 and 359 to 364 (GTGKTM).

Belongs to the AAA ATPase family. Hexamer. Mg(2+) serves as cofactor.

It is found in the nucleus. The catalysed reaction is ATP + H2O = ADP + phosphate + H(+). Its function is as follows. Has a role in spindle assembly which acts in the progression through mitosis during embryogenesis. Required for fertility. The sequence is that of Fidgetin-like protein 1 (figl-1) from Caenorhabditis briggsae.